We begin with the raw amino-acid sequence, 148 residues long: Large ribosomal subunit protein bL27m (148 aa).

A mitochondrion-targeting transit peptide spans 1–30 (MAAAALTLRTRAAVTALLSPTAPTALAVRH). Residues 28 to 48 (VRHASKKTGGSSKNLGGKSRG) are disordered.

This sequence belongs to the bacterial ribosomal protein bL27 family. In terms of assembly, component of the mitochondrial ribosome large subunit (39S) which comprises a 16S rRNA and about 50 distinct proteins.

The protein resides in the mitochondrion. The chain is Large ribosomal subunit protein bL27m (Mrpl27) from Mus musculus (Mouse).